The sequence spans 252 residues: tRNA pseudouridine synthase A (252 aa).

Residue aspartate 52 is the Nucleophile of the active site. Tyrosine 110 contributes to the substrate binding site.

Belongs to the tRNA pseudouridine synthase TruA family. Homodimer.

It catalyses the reaction uridine(38/39/40) in tRNA = pseudouridine(38/39/40) in tRNA. Functionally, formation of pseudouridine at positions 38, 39 and 40 in the anticodon stem and loop of transfer RNAs. This Syntrophotalea carbinolica (strain DSM 2380 / NBRC 103641 / GraBd1) (Pelobacter carbinolicus) protein is tRNA pseudouridine synthase A.